A 282-amino-acid polypeptide reads, in one-letter code: MAPISSTRPSHSIAADNPNPTTQVNFNTNMTETTIFYKSHNPGGESILLIHGGFSDGSEWDGVWPLLAEHNYHLLLPDMPSHGNSVDIHPFEIDDTVRRLAALIKAEARGGLAHVVGISIGGHIAAALASQHPSCVLSLIVSGFNIFTPNLFTPVLPLFVYGVQRGSGFARQPFAEWDRFCRGLGSLALTQDVFNILISSRELQTIECRTLVVAATRPGVSADNIDHSRRLFETVVAGNGSQVVQHRGMRHPWNEEEPKVFADMVKRWIITQELPDGFEVIP.

Polar residues predominate over residues Met-1–Ser-10. Residues Met-1 to Thr-22 are disordered. An AB hydrolase-1 domain is found at Thr-22–Ile-270.

This sequence belongs to the AB hydrolase superfamily.

The protein operates within mycotoxin biosynthesis. Its function is as follows. AB hydrolase superfamily protein; part of the gene cluster that mediates the biosynthesis of gramillins A and B, bicyclic lipopeptides that induce cell death in maize leaves but not in wheat leaves. The nonribosomal peptide synthetase GRA1 incorporates respectively a glutamic adic (Glu), a leucine (Leu), a serine (Ser), a hydroxyglutamine (HOGln), a 2-amino decanoic acid, and 2 cysteins (CysB and CysA). The biosynthesis of 2-amino decanoic acid incorporated in gramillins could be initiated by a fatty acid synthase composed of the alpha and beta subunits FGSG_00036 and FGSG_11656. The cytochrome P450 monooxygenase FGSG_15680 could hydroxylate the fatty acid chain. Subsequent oxidation to the ketone by the oxidoreductase FGSG_00048 and transamination by aminotransferase FGSG_00049 could form 2-amino-decanoic acid. On the other hand, FGSG_15680 could also be responsible for the HO-modified glutamine at the gamma-position. Whether hydroxylation occurs on the fully assembled product or on the Gln residue prior to assembly into the gramillins requires further proof. The thioredoxin FGSG_00043 could also be required for the disulfide-bond formation between CysA and CysB. The specific involvement of the remaining proteins from the cluster is more difficult to discern, but could have broader regulatory (FGSG_00040 and FGSG_11657) or enzymatic functions (FGSG_00044 and FGSG_00045). The final C-domain of GRA1 does not possess the expected sequence of a termination CT domain, often implicated in macrocyclization and release of a cyclopeptidein fungal NRPs; and the thioesterase FGSG_00047 may act in concert with the terminal C-domain of GRA1 to catalyze the formation of the macrocyclic anhydride and release of the products. This chain is AB hydrolase superfamily protein FGSG_00045, found in Gibberella zeae (strain ATCC MYA-4620 / CBS 123657 / FGSC 9075 / NRRL 31084 / PH-1) (Wheat head blight fungus).